Reading from the N-terminus, the 475-residue chain is Ribulose bisphosphate carboxylase large chain (475 aa).

A propeptide spanning residues 1–2 (MS) is cleaved from the precursor. Proline 3 bears the N-acetylproline mark. An N6,N6,N6-trimethyllysine modification is found at lysine 14. Residues asparagine 123 and threonine 173 each contribute to the substrate site. The active-site Proton acceptor is lysine 175. Lysine 177 contributes to the substrate binding site. Positions 201, 203, and 204 each coordinate Mg(2+). Lysine 201 bears the N6-carboxylysine mark. The active-site Proton acceptor is histidine 294. Residues arginine 295, histidine 327, and serine 379 each contribute to the substrate site.

This sequence belongs to the RuBisCO large chain family. Type I subfamily. Heterohexadecamer of 8 large chains and 8 small chains; disulfide-linked. The disulfide link is formed within the large subunit homodimers. Mg(2+) is required as a cofactor. The disulfide bond which can form in the large chain dimeric partners within the hexadecamer appears to be associated with oxidative stress and protein turnover.

It localises to the plastid. Its subcellular location is the chloroplast. The enzyme catalyses 2 (2R)-3-phosphoglycerate + 2 H(+) = D-ribulose 1,5-bisphosphate + CO2 + H2O. It carries out the reaction D-ribulose 1,5-bisphosphate + O2 = 2-phosphoglycolate + (2R)-3-phosphoglycerate + 2 H(+). RuBisCO catalyzes two reactions: the carboxylation of D-ribulose 1,5-bisphosphate, the primary event in carbon dioxide fixation, as well as the oxidative fragmentation of the pentose substrate in the photorespiration process. Both reactions occur simultaneously and in competition at the same active site. The protein is Ribulose bisphosphate carboxylase large chain of Pinus thunbergii (Japanese black pine).